The sequence spans 137 residues: Large ribosomal subunit protein uL16 (137 aa).

The protein belongs to the universal ribosomal protein uL16 family. As to quaternary structure, part of the 50S ribosomal subunit.

Its function is as follows. Binds 23S rRNA and is also seen to make contacts with the A and possibly P site tRNAs. The protein is Large ribosomal subunit protein uL16 of Pseudomonas fluorescens (strain Pf0-1).